Consider the following 146-residue polypeptide: Hemoglobin subunit beta (146 aa).

Residues 2–146 (HWSAEEKQLI…VAHALARKYH (145 aa)) enclose the Globin domain. H63 and H92 together coordinate heme b.

The protein belongs to the globin family. As to quaternary structure, heterotetramer of two alpha chains and two beta chains. As to expression, red blood cells.

Involved in oxygen transport from the lung to the various peripheral tissues. The sequence is that of Hemoglobin subunit beta (HBB) from Phasianus colchicus colchicus (Black-necked pheasant).